Consider the following 152-residue polypeptide: Cysteine and tyrosine-rich protein 1 (152 aa).

The N-terminal stretch at 1 to 27 (MDIPRSLRHPEILLVLLLSEITDICQA) is a signal peptide. The Extracellular segment spans residues 28–59 (YCEADCKSYCCDGTPPYCCSYYAYIGNVLSGT). The chain crosses the membrane as a helical span at residues 60 to 80 (AIAGIVFGIVFIMGVIAGIAI). Over 81-152 (CICMCMKSSR…PPPYPGPSRK (72 aa)) the chain is Cytoplasmic. The tract at residues 130–152 (PYTPTPPMSHYPSPPPYPGPSRK) is disordered.

Belongs to the CYYR1 family.

It is found in the membrane. The sequence is that of Cysteine and tyrosine-rich protein 1 (cyyr1) from Xenopus laevis (African clawed frog).